The primary structure comprises 380 residues: Protein phosphatase methylesterase 1 (380 aa).

Residues 1–38 are disordered; the sequence is MSALEKSMHLGRLPSRPPLPGSGGSQSGAKMRMGPGRK. Position 15 is a phosphoserine (S15). R16 carries the asymmetric dimethylarginine; alternate modification. Position 16 is an omega-N-methylarginine; alternate (R16). Phosphoserine is present on S42. Active-site residues include S156 and D181. Residues 255–265 show a composition bias toward acidic residues; sequence IEEEEEDEEGS. Positions 255–280 are disordered; it reads IEEEEEDEEGSESVNKRKKEDDMETK. Residues 268-280 are compositionally biased toward basic and acidic residues; that stretch reads VNKRKKEDDMETK. Residue H349 is part of the active site.

The protein belongs to the AB hydrolase superfamily. Binds PPP2CA and PPP2CB. In terms of processing, phosphorylated by SIK1 following increases in intracellular sodium, leading to dissociation from the protein phosphatase 2A (PP2A) complex and subsequent dephosphorylation of sodium/potassium-transporting ATPase ATP1A1.

The catalysed reaction is [phosphatase 2A protein]-C-terminal L-leucine methyl ester + H2O = [phosphatase 2A protein]-C-terminal L-leucine + methanol + H(+). In terms of biological role, demethylates proteins that have been reversibly carboxymethylated. Demethylates PPP2CB (in vitro) and PPP2CA. Binding to PPP2CA displaces the manganese ion and inactivates the enzyme. This is Protein phosphatase methylesterase 1 (PPME1) from Bos taurus (Bovine).